The sequence spans 1486 residues: Chromosome partition protein MukB (1486 aa).

Position 34-41 (Gly-34–Ser-41) interacts with ATP. Coiled-coil stretches lie at residues Leu-326–Gln-418, Leu-444–Gln-480, and Arg-509–Val-603. Residues Pro-666–Arg-783 are flexible hinge. Coiled-coil stretches lie at residues Glu-835–Glu-923, Glu-977–Ala-1115, and Val-1209–Ser-1266.

Belongs to the SMC family. MukB subfamily. As to quaternary structure, homodimerization via its hinge domain. Binds to DNA via its C-terminal region. Interacts, and probably forms a ternary complex, with MukE and MukF via its C-terminal region. The complex formation is stimulated by calcium or magnesium. Interacts with tubulin-related protein FtsZ.

It is found in the cytoplasm. The protein localises to the nucleoid. In terms of biological role, plays a central role in chromosome condensation, segregation and cell cycle progression. Functions as a homodimer, which is essential for chromosome partition. Involved in negative DNA supercoiling in vivo, and by this means organize and compact chromosomes. May achieve or facilitate chromosome segregation by condensation DNA from both sides of a centrally located replisome during cell division. In Escherichia coli O9:H4 (strain HS), this protein is Chromosome partition protein MukB.